The chain runs to 327 residues: Transaldolase (327 aa).

The Schiff-base intermediate with substrate role is filled by lysine 132.

It belongs to the transaldolase family. Type 1 subfamily. In terms of assembly, homodimer.

It localises to the cytoplasm. It carries out the reaction D-sedoheptulose 7-phosphate + D-glyceraldehyde 3-phosphate = D-erythrose 4-phosphate + beta-D-fructose 6-phosphate. It functions in the pathway carbohydrate degradation; pentose phosphate pathway; D-glyceraldehyde 3-phosphate and beta-D-fructose 6-phosphate from D-ribose 5-phosphate and D-xylulose 5-phosphate (non-oxidative stage): step 2/3. In terms of biological role, transaldolase is important for the balance of metabolites in the pentose-phosphate pathway. In Chlamydia felis (strain Fe/C-56) (Chlamydophila felis), this protein is Transaldolase.